An 882-amino-acid polypeptide reads, in one-letter code: Formin-like protein 9 (882 aa).

The signal sequence occupies residues 1-19 (MGMAMRCVLVLFSVSPVLL). The interval 67-92 (SRGRRHKRYSEAPAPAPAPVPAHQAR) is disordered. Residues 138–158 (IVALGVVGLCLVVLGVVIAAF) form a helical membrane-spanning segment. Disordered regions lie at residues 178-202 (RHGS…PDPL), 293-316 (THDS…LSPK), and 401-471 (TMTN…PLPR). Residues 298 to 308 (SDSSYQSLSPD) show a composition bias toward low complexity. Residues 427 to 441 (KPAPPPPPQKNPPPN) show a composition bias toward pro residues. An FH2 domain is found at 462 to 882 (VGKDGSPLPR…QTLNLVLPLK (421 aa)).

It belongs to the formin-like family. Class-I subfamily.

The protein localises to the membrane. The sequence is that of Formin-like protein 9 (FH9) from Oryza sativa subsp. japonica (Rice).